The chain runs to 501 residues: Lysine--tRNA ligase (501 aa).

The Mg(2+) site is built by glutamate 402 and glutamate 409.

The protein belongs to the class-II aminoacyl-tRNA synthetase family. As to quaternary structure, homodimer. Mg(2+) serves as cofactor.

The protein resides in the cytoplasm. The enzyme catalyses tRNA(Lys) + L-lysine + ATP = L-lysyl-tRNA(Lys) + AMP + diphosphate. This chain is Lysine--tRNA ligase (lysS), found in Helicobacter pylori (strain ATCC 700392 / 26695) (Campylobacter pylori).